The following is a 167-amino-acid chain: Effector CFEM8 (167 aa).

The first 17 residues, 1 to 17 (MQFSIVVMAALASLASA), serve as a signal peptide directing secretion. The 95-residue stretch at 18–112 (QSMDGIPTCA…TPAAAAPYPT (95 aa)) folds into the CFEM domain. 4 disulfide bridges follow: C26–C68, C30–C63, C40–C47, and C49–C85. Residue D44 participates in heme binding. N-linked (GlcNAc...) asparagine glycosylation is found at N117 and N135. Residue G143 is the site of GPI-anchor amidated glycine attachment. The propeptide at 144–167 (SAPQNVAGGLAGIFGLVVAAAFAL) is removed in mature form.

It belongs to the RBT5 family.

Its subcellular location is the cell membrane. The protein resides in the secreted. It is found in the host nucleus. It localises to the host cell membrane. In terms of biological role, appears to function during host infection, and may play a role in suppressing the host immune response. The polypeptide is Effector CFEM8 (Marssonina brunnea f. sp. multigermtubi (strain MB_m1) (Marssonina leaf spot fungus)).